Here is a 487-residue protein sequence, read N- to C-terminus: Serine/threonine-protein kinase 4 (487 aa).

Met1 carries the N-acetylmethionine modification. Thr3 bears the Phosphothreonine mark. The Protein kinase domain maps to 30–281 (FDVLEKLGEG…ATQLLQHPFV (252 aa)). ATP is bound by residues 36-44 (LGEGSYGSV) and Lys59. The active-site Proton acceptor is the Asp149. The residue at position 183 (Thr183) is a Phosphothreonine; by autocatalysis. Phosphoserine is present on Ser265. Residues 290-310 (LRDLINEAMDVKLKRQEAQQR) are a coiled coil. The tract at residues 305–338 (QEAQQREVDQDDEENSEEDELDSGTMVRAVGDDM) is disordered. Residues 313–326 (DQDDEENSEEDELD) show a composition bias toward acidic residues. Phosphoserine is present on Ser320. Phosphothreonine is present on residues Thr340 and Thr367. Thr387 carries the post-translational modification Phosphothreonine; by PKB/AKT1. Phosphoserine occurs at positions 410 and 414. The residue at position 433 (Tyr433) is a Phosphotyrosine. In terms of domain architecture, SARAH spans 433–480 (YEFLKSWTVEDLQKRLLALDPMMEQEIEEIRQKYQSKRQPILDAIEAK).

The protein belongs to the protein kinase superfamily. STE Ser/Thr protein kinase family. STE20 subfamily. In terms of assembly, homodimer; mediated via the coiled-coil region. Interacts with NORE1, which inhibits autoactivation. Interacts with and stabilizes SAV1. Interacts with RASSF1. Interacts with FOXO3. Interacts with RASSF2 (via SARAH domain). Interacts with AR, PKB/AKT1, TNNI3 and SIRT1. Interacts with DLG5 (via PDZ domain 3). Interacts with MARK3 and SCRIB in the presence of DLG5. The cofactor is Mg(2+). In terms of processing, autophosphorylated on serine and threonine residues. Phosphorylation at Thr-387 by PKB/AKT1, leads to inhibition of its: kinase activity, nuclear translocation and autophosphorylation at Thr-183. It also diminishes its cleavage by caspases and its ability to phosphorylate FOXO3. Post-translationally, proteolytically cleaved by caspase-3 during apoptosis at Asp-326 and Asp-349 resulting in a 37 kDa or a 39 kDa subunit respectively. The 39 kDa subunit is further cleaved into the 37 kDa form. Proteolytic cleavage results in kinase activation and nuclear translocation of the truncated form (MST1/N). It is less likely that cleavage at Asp-349 is a prerequisite for activation as this site is not conserved in the murine ortholog.

It is found in the cytoplasm. It localises to the nucleus. The enzyme catalyses L-seryl-[protein] + ATP = O-phospho-L-seryl-[protein] + ADP + H(+). The catalysed reaction is L-threonyl-[protein] + ATP = O-phospho-L-threonyl-[protein] + ADP + H(+). Inhibited by the C-terminal non-catalytic region. Activated by caspase-cleavage. Full activation also requires homodimerization and autophosphorylation of Thr-183. Activated by RASSF1 which acts by preventing its dephosphorylation. Stress-activated, pro-apoptotic kinase which, following caspase-cleavage, enters the nucleus and induces chromatin condensation followed by internucleosomal DNA fragmentation. Key component of the Hippo signaling pathway which plays a pivotal role in organ size control and tumor suppression by restricting proliferation and promoting apoptosis. The core of this pathway is composed of a kinase cascade wherein STK3/MST2 and STK4/MST1, in complex with its regulatory protein SAV1, phosphorylates and activates LATS1/2 in complex with its regulatory protein MOB1, which in turn phosphorylates and inactivates YAP1 oncoprotein and WWTR1/TAZ. Phosphorylation of YAP1 by LATS2 inhibits its translocation into the nucleus to regulate cellular genes important for cell proliferation, cell death, and cell migration. STK3/MST2 and STK4/MST1 are required to repress proliferation of mature hepatocytes, to prevent activation of facultative adult liver stem cells (oval cells), and to inhibit tumor formation. Phosphorylates 'Ser-14' of histone H2B (H2BS14ph) during apoptosis. Phosphorylates FOXO3 upon oxidative stress, which results in its nuclear translocation and cell death initiation. Phosphorylates MOBKL1A, MOBKL1B and RASSF2. Phosphorylates TNNI3 (cardiac Tn-I) and alters its binding affinity to TNNC1 (cardiac Tn-C) and TNNT2 (cardiac Tn-T). Phosphorylates FOXO1 on 'Ser-212' and regulates its activation and stimulates transcription of PMAIP1 in a FOXO1-dependent manner. Phosphorylates SIRT1 and inhibits SIRT1-mediated p53/TP53 deacetylation, thereby promoting p53/TP53 dependent transcription and apoptosis upon DNA damage. Acts as an inhibitor of PKB/AKT1. Phosphorylates AR on 'Ser-650' and suppresses its activity by intersecting with PKB/AKT1 signaling and antagonizing formation of AR-chromatin complexes. In Lemur catta (Ring-tailed lemur), this protein is Serine/threonine-protein kinase 4 (STK4).